We begin with the raw amino-acid sequence, 186 residues long: MKELTLDSAVATLRAGGVIAYPTEAVWGLGCDPSHEAAVHMVLRLKQRPIEKGMILVAADLAQLEGWVRLQALPDARQRAVLASWPGANTWILPAGPRAQPWVTGEHSGIAVRISAHPLVAELCRAWGGPLVSTSANLAGEPPARRREELDPRLLRLLDGILDGETGGLAQPTPIRDALSGNVLRS.

The YrdC-like domain maps to 3–186 (ELTLDSAVAT…DALSGNVLRS (184 aa)).

This sequence belongs to the SUA5 family. TsaC subfamily.

It is found in the cytoplasm. It catalyses the reaction L-threonine + hydrogencarbonate + ATP = L-threonylcarbamoyladenylate + diphosphate + H2O. In terms of biological role, required for the formation of a threonylcarbamoyl group on adenosine at position 37 (t(6)A37) in tRNAs that read codons beginning with adenine. Catalyzes the conversion of L-threonine, HCO(3)(-)/CO(2) and ATP to give threonylcarbamoyl-AMP (TC-AMP) as the acyladenylate intermediate, with the release of diphosphate. This chain is Threonylcarbamoyl-AMP synthase, found in Stenotrophomonas maltophilia (strain K279a).